Consider the following 279-residue polypeptide: NH(3)-dependent NAD(+) synthetase (279 aa).

An ATP-binding site is contributed by 46–53; the sequence is GISGGQDS. Residue Asp52 participates in Mg(2+) binding. Residue Arg145 coordinates deamido-NAD(+). ATP is bound at residue Thr165. Position 170 (Glu170) interacts with Mg(2+). Positions 178 and 185 each coordinate deamido-NAD(+). 2 residues coordinate ATP: Lys194 and Thr216. Deamido-NAD(+) is bound at residue 265–266; the sequence is HK.

This sequence belongs to the NAD synthetase family. As to quaternary structure, homodimer.

It catalyses the reaction deamido-NAD(+) + NH4(+) + ATP = AMP + diphosphate + NAD(+) + H(+). Its pathway is cofactor biosynthesis; NAD(+) biosynthesis; NAD(+) from deamido-NAD(+) (ammonia route): step 1/1. In terms of biological role, catalyzes the ATP-dependent amidation of deamido-NAD to form NAD. Uses ammonia as a nitrogen source. In Rhodococcus jostii (strain RHA1), this protein is NH(3)-dependent NAD(+) synthetase.